The sequence spans 238 residues: 1-(5-phosphoribosyl)-5-[(5-phosphoribosylamino)methylideneamino] imidazole-4-carboxamide isomerase (238 aa).

Residue aspartate 8 is the Proton acceptor of the active site. Catalysis depends on aspartate 127, which acts as the Proton donor.

Belongs to the HisA/HisF family.

The protein localises to the cytoplasm. The catalysed reaction is 1-(5-phospho-beta-D-ribosyl)-5-[(5-phospho-beta-D-ribosylamino)methylideneamino]imidazole-4-carboxamide = 5-[(5-phospho-1-deoxy-D-ribulos-1-ylimino)methylamino]-1-(5-phospho-beta-D-ribosyl)imidazole-4-carboxamide. It participates in amino-acid biosynthesis; L-histidine biosynthesis; L-histidine from 5-phospho-alpha-D-ribose 1-diphosphate: step 4/9. In Nitratiruptor sp. (strain SB155-2), this protein is 1-(5-phosphoribosyl)-5-[(5-phosphoribosylamino)methylideneamino] imidazole-4-carboxamide isomerase.